Reading from the N-terminus, the 955-residue chain is Eukaryotic translation initiation factor 3 subunit C (955 aa).

2 disordered regions span residues 1–22 (MSRF…SEPV) and 157–299 (RAAP…EEGW). The segment covering 162 to 183 (DFAEEEEDDEREDEKGSDEEEE) has biased composition (acidic residues). Residues 206-218 (VKPVADSDSSDWG) are compositionally biased toward low complexity. Residues 219-229 (SDSDSDSTSSD) show a composition bias toward acidic residues. Residues 230–250 (EDAKYTSIRDRFLKKPEKGTE) are compositionally biased toward basic and acidic residues. Positions 288 to 297 (MFDENEEEEE) are enriched in acidic residues. Positions 658–834 (FHMHINLELL…ETIVMHRSEP (177 aa)) constitute a PCI domain. The interval 865 to 955 (NFFQRGGNQG…RNVEYQNKAE (91 aa)) is disordered. Over residues 882–894 (YRNQNQNQNWNNN) the composition is skewed to low complexity. The span at 911-955 (GEGREQREHHRDHHRDQREHREHQNREFREQREQMRNVEYQNKAE) shows a compositional bias: basic and acidic residues.

The protein belongs to the eIF-3 subunit C family. In terms of assembly, component of the eukaryotic translation initiation factor 3 (eIF-3) complex.

Its subcellular location is the cytoplasm. Functionally, component of the eukaryotic translation initiation factor 3 (eIF-3) complex, which is involved in protein synthesis of a specialized repertoire of mRNAs and, together with other initiation factors, stimulates binding of mRNA and methionyl-tRNAi to the 40S ribosome. The eIF-3 complex specifically targets and initiates translation of a subset of mRNAs involved in cell proliferation. The protein is Eukaryotic translation initiation factor 3 subunit C of Anopheles gambiae (African malaria mosquito).